Here is a 416-residue protein sequence, read N- to C-terminus: Transcription termination factor Rho (416 aa).

The Rho RNA-BD domain occupies 51–121 (LIYSYGELDI…LKLIYVNGEK (71 aa)). Residues 162–167 (GKGQRG), 174–179 (KAGKTT), and R205 each bind ATP.

It belongs to the Rho family. Homohexamer. The homohexamer assembles into an open ring structure.

Its function is as follows. Facilitates transcription termination by a mechanism that involves Rho binding to the nascent RNA, activation of Rho's RNA-dependent ATPase activity, and release of the mRNA from the DNA template. This is Transcription termination factor Rho from Streptobacillus moniliformis (strain ATCC 14647 / DSM 12112 / NCTC 10651 / 9901).